The primary structure comprises 376 residues: 26S proteasome non-ATPase regulatory subunit 13 (376 aa).

The PCI domain occupies 171 to 338 (SYYKDALRFL…KRVHMTWVQP (168 aa)). K298 is modified (N6-acetyllysine).

It belongs to the proteasome subunit S11 family. Component of the 19S proteasome regulatory particle complex. The 26S proteasome consists of a 20S core particle (CP) and two 19S regulatory subunits (RP). The regulatory particle is made of a lid composed of 9 subunits including PSMD13, a base containing 6 ATPases and few additional components.

Functionally, component of the 26S proteasome, a multiprotein complex involved in the ATP-dependent degradation of ubiquitinated proteins. This complex plays a key role in the maintenance of protein homeostasis by removing misfolded or damaged proteins, which could impair cellular functions, and by removing proteins whose functions are no longer required. Therefore, the proteasome participates in numerous cellular processes, including cell cycle progression, apoptosis, or DNA damage repair. This is 26S proteasome non-ATPase regulatory subunit 13 from Rattus norvegicus (Rat).